The following is a 145-amino-acid chain: Transcription antitermination protein NusB (145 aa).

Belongs to the NusB family.

Its function is as follows. Involved in transcription antitermination. Required for transcription of ribosomal RNA (rRNA) genes. Binds specifically to the boxA antiterminator sequence of the ribosomal RNA (rrn) operons. The sequence is that of Transcription antitermination protein NusB from Burkholderia cenocepacia (strain HI2424).